The primary structure comprises 438 residues: Methyl-coenzyme M reductase subunit beta (438 aa).

Y367 is a binding site for coenzyme M. Coenzyme B is bound at residue G369.

The protein belongs to the methyl-coenzyme M reductase beta subunit family. MCR is a hexamer of two alpha, two beta, and two gamma chains, forming a dimer of heterotrimers. It depends on coenzyme F430 as a cofactor.

The protein localises to the cytoplasm. It catalyses the reaction coenzyme B + methyl-coenzyme M = methane + coenzyme M-coenzyme B heterodisulfide. It functions in the pathway one-carbon metabolism; methyl-coenzyme M reduction; methane from methyl-coenzyme M: step 1/1. In terms of biological role, component of the methyl-coenzyme M reductase (MCR) I that catalyzes the reductive cleavage of methyl-coenzyme M (CoM-S-CH3 or 2-(methylthio)ethanesulfonate) using coenzyme B (CoB or 7-mercaptoheptanoylthreonine phosphate) as reductant which results in the production of methane and the mixed heterodisulfide of CoB and CoM (CoM-S-S-CoB). This is the final step in methanogenesis. This is Methyl-coenzyme M reductase subunit beta (mcrB) from Methanothermus fervidus.